A 260-amino-acid polypeptide reads, in one-letter code: Indole-3-glycerol phosphate synthase (260 aa).

The protein belongs to the TrpC family.

It carries out the reaction 1-(2-carboxyphenylamino)-1-deoxy-D-ribulose 5-phosphate + H(+) = (1S,2R)-1-C-(indol-3-yl)glycerol 3-phosphate + CO2 + H2O. It functions in the pathway amino-acid biosynthesis; L-tryptophan biosynthesis; L-tryptophan from chorismate: step 4/5. This is Indole-3-glycerol phosphate synthase from Chloroherpeton thalassium (strain ATCC 35110 / GB-78).